The primary structure comprises 129 residues: uncharacterized protein (129 aa).

It is found in the cytoplasm. The protein resides in the cytosol. It localises to the nucleus. This is an uncharacterized protein from Schizosaccharomyces pombe (strain 972 / ATCC 24843) (Fission yeast).